Here is a 63-residue protein sequence, read N- to C-terminus: MNRALILTFVLFFALFAISSAVNVENDFSSPVSQFCATLSELKCWINNICFWSTADKKCKPLH.

A signal peptide spans 1-21 (MNRALILTFVLFFALFAISSA).

This is an uncharacterized protein from Dictyostelium discoideum (Social amoeba).